The sequence spans 387 residues: Large ribosomal subunit protein uL3 (387 aa).

Belongs to the universal ribosomal protein uL3 family.

It localises to the cytoplasm. The polypeptide is Large ribosomal subunit protein uL3 (RPL3) (Kluyveromyces lactis (strain ATCC 8585 / CBS 2359 / DSM 70799 / NBRC 1267 / NRRL Y-1140 / WM37) (Yeast)).